The chain runs to 478 residues: Solute carrier family 49 member 4 (478 aa).

The tract at residues 1-27 (MGSGWSSEEEERQPLLGPGLGPAPGAA) is disordered. The Cytoplasmic segment spans residues 1–51 (MGSGWSSEEEERQPLLGPGLGPAPGAARRGREATAVLPAAGPNPGRVYGRR). The short motif at 15–16 (LL) is the Di-leucine motif; mediates lysosomal localization element. Residues 52 to 72 (WLVLLLFSLLAFAQGLVWNTW) form a helical membrane-spanning segment. Topologically, residues 73–89 (GPIQNSARQAYGFSGWD) are lumenal. The chain crosses the membrane as a helical span at residues 90-110 (IALLVLWGPIGFLPCFAFMWL). Residues 111 to 117 (LDKRGLR) lie on the Cytoplasmic side of the membrane. Residues 118–138 (VTVLLTSFLMVLGTGLRCIPV) traverse the membrane as a helical segment. At 139–152 (SDLALKKRLIHGGQ) the chain is on the lumenal side. A helical transmembrane segment spans residues 153–173 (ILNGLAGPTVMNAAPFLSTTW). Over 174–184 (FSADERATATA) the chain is Cytoplasmic. The helical transmembrane segment at 185-205 (IASMLSYLGGACAFLVGPLVV) threads the bilayer. Residues 206-229 (PAPNGTAPLLAAESSRAHIKDRIE) lie on the Lumenal side of the membrane. An N-linked (GlcNAc...) asparagine glycan is attached at Asn209. The chain crosses the membrane as a helical span at residues 230–250 (TVLYAEFGVVCLIFSATLAYF). The Cytoplasmic segment spans residues 251 to 281 (PPRPPLPPSVAAASQRLSYRRSFCRLLSNLR). The chain crosses the membrane as a helical span at residues 282 to 302 (FLMIALAYAIPLGVFAGWSGV). Residues 303–314 (LDLILTPVHVSQ) lie on the Lumenal side of the membrane. A helical transmembrane segment spans residues 315–335 (VDAGWIGFWSIVGGCVVGIAM). The Cytoplasmic portion of the chain corresponds to 336–347 (ARFADFIRGMLK). Residues 348–368 (LILLLLFSGATLSSTWFTLTC) traverse the membrane as a helical segment. Residues 369–384 (LNSITHLPLTTVTLYA) are Lumenal-facing. Residues 385–405 (SCILLGVFLNSSVPIFFELFV) traverse the membrane as a helical segment. Over 406 to 414 (ETVYPVPEG) the chain is Cytoplasmic. The helical transmembrane segment at 415-435 (ITCGVVTFLSNMFMGVLLFFV) threads the bilayer. The Lumenal portion of the chain corresponds to 436-442 (TFYHTEL). A helical membrane pass occupies residues 443-463 (SWFNWCLPGSCLLSLLLILCF). At 464–478 (RESYDRLYLDVVVSV) the chain is on the cytoplasmic side.

The protein belongs to the major facilitator superfamily. Post-translationally, cleaved in lysosomes by cathepsin L between Leu-214 and Ala-261, generating a N-glycosylated N-terminal and a non-glycosylated C-terminal fragment.

The protein localises to the lysosome membrane. It catalyses the reaction pyridoxine(out) + n H(+)(out) = pyridoxine(in) + n H(+)(in). In terms of biological role, mediates H(+)-dependent pyridoxine transport. In Mus musculus (Mouse), this protein is Solute carrier family 49 member 4 (Slc49a4).